A 129-amino-acid polypeptide reads, in one-letter code: Profilin-4 (129 aa).

It belongs to the profilin family.

Its subcellular location is the cytoplasm. Functionally, involved in male fertility. Required for manchette development and acrosome biogenesis during spermiogenesis. Binds in vitro to phospholipids, including phosphatidylinositol 3-phosphate (PtdIns(3)P), phosphatidylinositol 4,5-bisphosphate (PtdIns(4,5)P2), phosphatidylinositol 4-phosphate (PtdIns(4)P) and phosphatidic acid (PA). Contrary to other profilin family members, does not bind to actin in vitro. The polypeptide is Profilin-4 (PFN4) (Bos taurus (Bovine)).